A 305-amino-acid polypeptide reads, in one-letter code: 3-methyl-2-oxobutanoate hydroxymethyltransferase (305 aa).

The Mg(2+) site is built by Asp-52 and Asp-95. Residues 52–53, Asp-95, and Lys-125 each bind 3-methyl-2-oxobutanoate; that span reads DS. Residue Glu-127 coordinates Mg(2+). Glu-194 serves as the catalytic Proton acceptor.

It belongs to the PanB family. As to quaternary structure, homodecamer; pentamer of dimers. It depends on Mg(2+) as a cofactor.

It is found in the cytoplasm. It carries out the reaction 3-methyl-2-oxobutanoate + (6R)-5,10-methylene-5,6,7,8-tetrahydrofolate + H2O = 2-dehydropantoate + (6S)-5,6,7,8-tetrahydrofolate. Its pathway is cofactor biosynthesis; (R)-pantothenate biosynthesis; (R)-pantoate from 3-methyl-2-oxobutanoate: step 1/2. Catalyzes the reversible reaction in which hydroxymethyl group from 5,10-methylenetetrahydrofolate is transferred onto alpha-ketoisovalerate to form ketopantoate. The protein is 3-methyl-2-oxobutanoate hydroxymethyltransferase of Anaeromyxobacter sp. (strain Fw109-5).